The primary structure comprises 310 residues: Translocator protein BipD (310 aa).

Coiled-coil stretches lie at residues 127-171 and 250-299; these read DPIL…LQDY and DTAR…AIST.

Belongs to the invasin protein D family.

It localises to the secreted. In terms of biological role, required for invasion of epithelial cells, as well as for survival within host cells, escape from endocytic vesicles and subsequent actin-tail formation. Probably regulates the secretion of effectors BipB and BipC and their final integration into the target cell membrane. The protein is Translocator protein BipD (bipD) of Burkholderia thailandensis (strain ATCC 700388 / DSM 13276 / CCUG 48851 / CIP 106301 / E264).